The primary structure comprises 351 residues: Nitronate monooxygenase (351 aa).

Residues L21, N69, Q176, G181, G218, and Q237 to T240 contribute to the FMN site.

The protein belongs to the nitronate monooxygenase family. NMO class I subfamily. Requires FMN as cofactor.

It carries out the reaction 3 propionate 3-nitronate + 3 O2 + H2O = 3 3-oxopropanoate + 2 nitrate + nitrite + H2O2 + 3 H(+). Functionally, nitronate monooxygenase that uses molecular oxygen to catalyze the oxidative denitrification of alkyl nitronates. The toxin propionate 3-nitronate (P3N) is the best substrate (and the presumed physiological substrate), but this enzyme is also active on other primary and secondary nitronates such as propyl-1-nitronate, ethylnitronate, pentyl-1-nitronate, butyl-1-nitronate and propyl-2-nitronate. Is likely involved in the degradation of P3N, that allows P.aeruginosa PAO1 to grow on 3-nitropropionate/P3N as the sole nitrogen source. Also functions in the detoxification of P3N, a metabolic poison produced by plants and fungi as a defense mechanism. Cannot oxidize nitroalkanes such as 3-nitropropionate, nitroethane, 1-nitropropane, 1-nitrobutane, 1-nitropentane, or 2-nitropropane. This Pseudomonas aeruginosa (strain ATCC 15692 / DSM 22644 / CIP 104116 / JCM 14847 / LMG 12228 / 1C / PRS 101 / PAO1) protein is Nitronate monooxygenase.